Consider the following 288-residue polypeptide: MAEYSGLTKTSSALPRLSSKRTYSLMRAEAPSESVPYYSYCLRLRRLVLIFVNPLYFMRYRNWLAQDDTLSELLELINRQLTEKGLKVEKASAAVVDATIIQTAGSKQRQAIEVDEEGQISGQTTPSKDKDARWIKKNGLYKLGYKQHTRTDAEGYTEKLHITPANAHECKHLPPLLEGLPKGTTVYADKGYDSAENRQHLKEHQLQDGIMRKACRNRPLTETQTKRNRYLSKTRYVVEQSFGTLHRKFRYARAAYFGLIKVSAQSHLKAMCLNLLKAANRLSAPASA.

The protein belongs to the transposase 11 family.

In terms of biological role, involved in the transposition of the insertion sequence. This is Transposase for insertion sequence element IS1106 from Neisseria meningitidis serogroup B.